We begin with the raw amino-acid sequence, 333 residues long: Dioxygenase cnsJ (333 aa).

Fe cation contacts are provided by His-153, Asp-155, and His-235. A disordered region spans residues Asn-309–Ile-333. Over residues Asn-323 to Ile-333 the composition is skewed to basic and acidic residues.

It belongs to the PhyH family. In terms of assembly, homodimer. Fe cation is required as a cofactor.

It functions in the pathway alkaloid biosynthesis. Dioxygenase; part of the gene cluster that mediates the biosynthesis of communesins, a prominent class of indole alkaloids with great potential as pharmaceuticals. Communesins are biosynthesized by the coupling of tryptamine and aurantioclavine, two building blocks derived from L-tryptophan. The L-tryptophan decarboxylase cnsB converts L-tryptophan to tryptamine, whereas the tryptophan dimethylallyltransferase cnsF converts L-tryptophan to 4-dimethylallyl tryptophan which is further transformed to aurantioclavine by the aurantioclavine synthase cnsA, probably aided by the catalase cnsD. The cytochrome P450 monooxygenase cnsC catalyzes the heterodimeric coupling between the two different indole moieties, tryptamine and aurantioclavine, to construct vicinal quaternary stereocenters and yield the heptacyclic communesin scaffold. The O-methyltransferase cnsE then methylates the communesin scaffold to produce communesin K, the simplest characterized communesin that contains the heptacyclic core. The dioxygenase cnsJ converts communesin K into communesin I. Acylation to introduce the hexadienyl group at position N16 of communesin I by the acyltransferase cnsK leads to the production of communesin B. The hexadienyl group is produced by the highly reducing polyketide synthase cnsI, before being hydrolytically removed from cnsI by the serine hydrolase cnsH, converted into hexadienyl-CoA by the CoA ligase cnsG, and then transferred to communesin I by cnsK. Surprisingly, cnsK may also be a promiscuous acyltransferase that can tolerate a range of acyl groups, including acetyl-, propionyl-, and butyryl-CoA, which lead to communesins A, G and H respectively. The roles of the alpha-ketoglutarate-dependent dioxygenases cnsM and cnsP have still to be determined. The sequence is that of Dioxygenase cnsJ from Penicillium expansum (Blue mold rot fungus).